The sequence spans 180 residues: Acireductone dioxygenase (180 aa).

Positions 97, 99, 103, and 141 each coordinate Fe(2+). Ni(2+) contacts are provided by H97, H99, E103, and H141.

Belongs to the acireductone dioxygenase (ARD) family. Monomer. It depends on Fe(2+) as a cofactor. The cofactor is Ni(2+).

The enzyme catalyses 1,2-dihydroxy-5-(methylsulfanyl)pent-1-en-3-one + O2 = 3-(methylsulfanyl)propanoate + CO + formate + 2 H(+). It catalyses the reaction 1,2-dihydroxy-5-(methylsulfanyl)pent-1-en-3-one + O2 = 4-methylsulfanyl-2-oxobutanoate + formate + 2 H(+). Its pathway is amino-acid biosynthesis; L-methionine biosynthesis via salvage pathway; L-methionine from S-methyl-5-thio-alpha-D-ribose 1-phosphate: step 5/6. Functionally, catalyzes 2 different reactions between oxygen and the acireductone 1,2-dihydroxy-3-keto-5-methylthiopentene (DHK-MTPene) depending upon the metal bound in the active site. Fe-containing acireductone dioxygenase (Fe-ARD) produces formate and 2-keto-4-methylthiobutyrate (KMTB), the alpha-ketoacid precursor of methionine in the methionine recycle pathway. Ni-containing acireductone dioxygenase (Ni-ARD) produces methylthiopropionate, carbon monoxide and formate, and does not lie on the methionine recycle pathway. In Yersinia pseudotuberculosis serotype O:3 (strain YPIII), this protein is Acireductone dioxygenase.